The primary structure comprises 189 residues: UPF0301 protein PputW619_0469 (189 aa).

This sequence belongs to the UPF0301 (AlgH) family.

The chain is UPF0301 protein PputW619_0469 from Pseudomonas putida (strain W619).